We begin with the raw amino-acid sequence, 346 residues long: Cyclin-dependent kinase 7 (346 aa).

A2 is modified (N-acetylalanine). Position 7 is a phosphoserine (S7). The region spanning Y12–F295 is the Protein kinase domain. Residues L18 to V26 and K41 contribute to the ATP site. D137 (proton acceptor) is an active-site residue. Residue S164 is modified to Phosphoserine; by CDK1 and CDK2. Residue T170 is modified to Phosphothreonine; by CDK2. The residue at position 321 (S321) is a Phosphoserine.

It belongs to the protein kinase superfamily. CMGC Ser/Thr protein kinase family. CDC2/CDKX subfamily. In terms of assembly, associates primarily with cyclin-H (CCNH) and MAT1 to form the CAK complex. CAK can further associate with the core-TFIIH to form the TFIIH basal transcription factor; this complex is sensitive to UV light. The CAK complex binds to p53/TP53 in response to DNA damage. Interacts with CDK2, SF1/NR5A1, PUF60 and PRKCI. Interacts with HINT1. Post-translationally, phosphorylation of Ser-164 during mitosis inactivates the enzyme. Phosphorylation of Thr-170 is required for activity. Phosphorylated at Ser-164 and Thr-170 by CDK2. In terms of tissue distribution, ubiquitous.

It is found in the nucleus. It localises to the cytoplasm. The protein resides in the perinuclear region. It carries out the reaction L-seryl-[protein] + ATP = O-phospho-L-seryl-[protein] + ADP + H(+). It catalyses the reaction L-threonyl-[protein] + ATP = O-phospho-L-threonyl-[protein] + ADP + H(+). The catalysed reaction is [DNA-directed RNA polymerase] + ATP = phospho-[DNA-directed RNA polymerase] + ADP + H(+). Its activity is regulated as follows. Inactivated by phosphorylation. Repressed by roscovitine (seliciclib, CYC202), R547 (Ro-4584820) and SNS-032 (BMS-387032). The association of p53/TP53 to the CAK complex in response to DNA damage reduces kinase activity toward CDK2 and RNA polymerase II repetitive C-terminal domain (CTD), thus stopping cell cycle progression. The inactivation by roscovitine promotes caspase-mediated apoptosis in leukemic cells. Specifically inactivated by THZ1. Its function is as follows. Serine/threonine kinase involved in cell cycle control and in RNA polymerase II-mediated RNA transcription. Cyclin-dependent kinases (CDKs) are activated by the binding to a cyclin and mediate the progression through the cell cycle. Each different complex controls a specific transition between 2 subsequent phases in the cell cycle. Required for both activation and complex formation of CDK1/cyclin-B during G2-M transition, and for activation of CDK2/cyclins during G1-S transition (but not complex formation). CDK7 is the catalytic subunit of the CDK-activating kinase (CAK) complex. Phosphorylates SPT5/SUPT5H, SF1/NR5A1, POLR2A, p53/TP53, CDK1, CDK2, CDK4, CDK6 and CDK11B/CDK11. Initiates transcription by RNA polymerase II by mediating phosphorylation of POLR2A at 'Ser-5' of the repetitive C-terminal domain (CTD) when POLR2A is in complex with DNA, promoting dissociation from DNA and initiation. CAK activates the cyclin-associated kinases CDK1, CDK2, CDK4 and CDK6 by threonine phosphorylation, thus regulating cell cycle progression. CAK complexed to the core-TFIIH basal transcription factor activates RNA polymerase II by serine phosphorylation of the CTD of POLR2A, allowing its escape from the promoter and elongation of the transcripts. Its expression and activity are constant throughout the cell cycle. Upon DNA damage, triggers p53/TP53 activation by phosphorylation, but is inactivated in turn by p53/TP53; this feedback loop may lead to an arrest of the cell cycle and of the transcription, helping in cell recovery, or to apoptosis. Required for DNA-bound peptides-mediated transcription and cellular growth inhibition. The protein is Cyclin-dependent kinase 7 (CDK7) of Homo sapiens (Human).